A 437-amino-acid chain; its full sequence is 3-deoxy-D-manno-octulosonic acid transferase (437 aa).

A helical; Signal-anchor membrane pass occupies residues 16–36 (VVLVCAFVIALPKLLYKMLVY). Glu70 serves as the catalytic Proton acceptor. CMP contacts are provided by residues 279–280 (PR), 319–321 (IGL), and 346–349 (NLLE).

Belongs to the glycosyltransferase group 1 family. Glycosyltransferase 30 subfamily.

Its subcellular location is the cell inner membrane. The catalysed reaction is lipid IVA (E. coli) + CMP-3-deoxy-beta-D-manno-octulosonate = alpha-Kdo-(2-&gt;6)-lipid IVA (E. coli) + CMP + H(+). It carries out the reaction alpha-Kdo-(2-&gt;6)-lipid IVA (E. coli) + CMP-3-deoxy-beta-D-manno-octulosonate = alpha-Kdo-(2-&gt;4)-alpha-Kdo-(2-&gt;6)-lipid IVA (E. coli) + CMP + H(+). It catalyses the reaction alpha-Kdo-(2-&gt;4)-alpha-Kdo-(2-&gt;6)-lipid IVA (E. coli) + CMP-3-deoxy-beta-D-manno-octulosonate = alpha-Kdo-(2-&gt;8)-alpha-Kdo-(2-&gt;4)-alpha-Kdo-(2-&gt;6)-lipid IVA (E. coli) + CMP + H(+). The protein operates within bacterial outer membrane biogenesis; LPS core biosynthesis. Involved in lipopolysaccharide (LPS) biosynthesis. Catalyzes the transfer of three 3-deoxy-D-manno-octulosonate (Kdo) residues from CMP-Kdo to lipid IV(A), the tetraacyldisaccharide-1,4'-bisphosphate precursor of lipid A. Thus generates the genus-specific LPS epitope of Chlamydia, composed of the trisaccharide alpha-Kdo-(2-&gt;8)-alpha-Kdo-(2-&gt;4)-alpha-Kdo. This is 3-deoxy-D-manno-octulosonic acid transferase (waaA) from Chlamydia pneumoniae (Chlamydophila pneumoniae).